The primary structure comprises 388 residues: Phosphopentomutase (388 aa).

Residues Asp-10, Asp-282, His-287, Asp-323, His-324, and His-335 each coordinate Mn(2+).

It belongs to the phosphopentomutase family. It depends on Mn(2+) as a cofactor.

The protein localises to the cytoplasm. It carries out the reaction 2-deoxy-alpha-D-ribose 1-phosphate = 2-deoxy-D-ribose 5-phosphate. The enzyme catalyses alpha-D-ribose 1-phosphate = D-ribose 5-phosphate. The protein operates within carbohydrate degradation; 2-deoxy-D-ribose 1-phosphate degradation; D-glyceraldehyde 3-phosphate and acetaldehyde from 2-deoxy-alpha-D-ribose 1-phosphate: step 1/2. Its function is as follows. Isomerase that catalyzes the conversion of deoxy-ribose 1-phosphate (dRib-1-P) and ribose 1-phosphate (Rib-1-P) to deoxy-ribose 5-phosphate (dRib-5-P) and ribose 5-phosphate (Rib-5-P), respectively. The chain is Phosphopentomutase from Acetivibrio thermocellus (strain ATCC 27405 / DSM 1237 / JCM 9322 / NBRC 103400 / NCIMB 10682 / NRRL B-4536 / VPI 7372) (Clostridium thermocellum).